Consider the following 152-residue polypeptide: ALK and LTK ligand 2 (152 aa).

Residues 1-24 form the signal peptide; it reads MRGPGHPLLLGLLLVLGAAGRGRG. 2 cysteine pairs are disulfide-bonded: Cys111/Cys147 and Cys125/Cys134.

The protein belongs to the ALKAL family. In terms of assembly, homodimer; interchain disulfide bond is not required for homodimerization. As to expression, widely expressed with highest levels in adrenal gland and modest levels in pancreas, testis and uterus.

It localises to the secreted. The protein localises to the cell membrane. Cytokine that acts as a physiological ligand for receptor tyrosine kinases LTK and ALK, leading to their activation. Cytokine-binding is sufficient to activate LTK. In contrast, ALKAL2-driven activation of ALK is coupled with heparin-binding to ALK. Stimulation of ALK signaling is involved in neural development and regulation of energy expenditure. In Homo sapiens (Human), this protein is ALK and LTK ligand 2.